We begin with the raw amino-acid sequence, 238 residues long: tRNA1(Val) (adenine(37)-N6)-methyltransferase (238 aa).

It belongs to the methyltransferase superfamily. tRNA (adenine-N(6)-)-methyltransferase family.

Its subcellular location is the cytoplasm. It catalyses the reaction adenosine(37) in tRNA1(Val) + S-adenosyl-L-methionine = N(6)-methyladenosine(37) in tRNA1(Val) + S-adenosyl-L-homocysteine + H(+). In terms of biological role, specifically methylates the adenine in position 37 of tRNA(1)(Val) (anticodon cmo5UAC). In Shewanella baltica (strain OS185), this protein is tRNA1(Val) (adenine(37)-N6)-methyltransferase.